Consider the following 399-residue polypeptide: Acetylornithine aminotransferase (399 aa).

Pyridoxal 5'-phosphate contacts are provided by residues 99 to 100 (GA) and F132. R135 contacts N(2)-acetyl-L-ornithine. Residue 217-220 (DEVQ) participates in pyridoxal 5'-phosphate binding. K246 is modified (N6-(pyridoxal phosphate)lysine). N(2)-acetyl-L-ornithine is bound at residue T274. T275 contributes to the pyridoxal 5'-phosphate binding site.

It belongs to the class-III pyridoxal-phosphate-dependent aminotransferase family. ArgD subfamily. Homodimer. It depends on pyridoxal 5'-phosphate as a cofactor.

Its subcellular location is the cytoplasm. It carries out the reaction N(2)-acetyl-L-ornithine + 2-oxoglutarate = N-acetyl-L-glutamate 5-semialdehyde + L-glutamate. It participates in amino-acid biosynthesis; L-arginine biosynthesis; N(2)-acetyl-L-ornithine from L-glutamate: step 4/4. The sequence is that of Acetylornithine aminotransferase from Agrobacterium fabrum (strain C58 / ATCC 33970) (Agrobacterium tumefaciens (strain C58)).